The following is a 308-amino-acid chain: MSNSPESSTPKQSIPARFPKWLRQKLPLGKVFSRTDGTIKNKGLPTVCEEASCPNRTHCWSRHTATYLALGDACTRRCGFCDIDFTKKPLPPDPQEGEKIAASAKALGLKHIVITMVSRDDLEDGGADALARIITTLHIELPEATIEVLASDFEGNIDALHHLLDARIAIYNHNVETVERLSPLVRHKATYRRSLMMLEQAAQYLPDLMIKSGIMVGLGEQESEIKQTLKDLADHGVKIVTIGQYLRPSRRHIPVKSYVSPETFDYYRSVGEALGLFIYAGPFVRSSFNADAVFEAMSQRERLSASIQ.

Positions 48, 53, 59, 74, 78, 81, and 287 each coordinate [4Fe-4S] cluster. One can recognise a Radical SAM core domain in the interval 60–277 (WSRHTATYLA…RSVGEALGLF (218 aa)).

It belongs to the radical SAM superfamily. Lipoyl synthase family. [4Fe-4S] cluster is required as a cofactor.

The protein resides in the cytoplasm. It catalyses the reaction [[Fe-S] cluster scaffold protein carrying a second [4Fe-4S](2+) cluster] + N(6)-octanoyl-L-lysyl-[protein] + 2 oxidized [2Fe-2S]-[ferredoxin] + 2 S-adenosyl-L-methionine + 4 H(+) = [[Fe-S] cluster scaffold protein] + N(6)-[(R)-dihydrolipoyl]-L-lysyl-[protein] + 4 Fe(3+) + 2 hydrogen sulfide + 2 5'-deoxyadenosine + 2 L-methionine + 2 reduced [2Fe-2S]-[ferredoxin]. It participates in protein modification; protein lipoylation via endogenous pathway; protein N(6)-(lipoyl)lysine from octanoyl-[acyl-carrier-protein]: step 2/2. Its function is as follows. Catalyzes the radical-mediated insertion of two sulfur atoms into the C-6 and C-8 positions of the octanoyl moiety bound to the lipoyl domains of lipoate-dependent enzymes, thereby converting the octanoylated domains into lipoylated derivatives. This Chlamydia muridarum (strain MoPn / Nigg) protein is Lipoyl synthase.